A 168-amino-acid polypeptide reads, in one-letter code: Putative defense protein 1 (168 aa).

The N-terminal stretch at 1–18 (MMFAYIVAVVSALALTSA) is a signal peptide. The 150-residue stretch at 19 to 168 (FPTGAPRSAC…SAPVKILSHH (150 aa)) folds into the Reelin domain. Cysteines 28 and 105 form a disulfide.

This sequence belongs to the insect defense protein family. In terms of tissue distribution, very highly expressed in midgut, and highly expressed in fat body, silk gland and epidermis.

The protein resides in the secreted. As this protein is expressed upon bacterial infection, it may have antimicrobial activity. The polypeptide is Putative defense protein 1 (Antheraea mylitta (Tasar silkworm)).